Reading from the N-terminus, the 321-residue chain is Basic peroxidase (321 aa).

The N-terminal stretch at 1–30 (MSYHKSSGTTLMVPLFMLLISVNYFMSCNA) is a signal peptide. Gln31 carries the post-translational modification Pyrrolidone carboxylic acid. Cystine bridges form between Cys41/Cys117, Cys74/Cys79, Cys123/Cys317, and Cys202/Cys228. The Proton acceptor role is filled by His72. Positions 73, 76, 78, 80, and 82 each coordinate Ca(2+). Pro165 lines the substrate pocket. His195 contributes to the heme b binding site. Thr196 lines the Ca(2+) pocket. 2 N-linked (GlcNAc...) asparagine glycosylation sites follow: Asn211 and Asn221. Positions 241, 244, and 249 each coordinate Ca(2+).

This sequence belongs to the peroxidase family. Classical plant (class III) peroxidase subfamily. Heme b is required as a cofactor. Requires Ca(2+) as cofactor. Post-translationally, N-glycosylated. In terms of tissue distribution, expressed in tracheary elements, roots, young and old hypocotyls, and stems in the partially glycosylated form and in roots and young hypocotyls in the fully glycosylated form. None of the isoforms is significantly expressed in leaves or cotyledons.

The protein resides in the secreted. It carries out the reaction 2 a phenolic donor + H2O2 = 2 a phenolic radical donor + 2 H2O. Functionally, removal of H(2)O(2), oxidation of toxic reductants, biosynthesis and degradation of lignin, suberization, auxin catabolism, response to environmental stresses such as wounding, pathogen attack and oxidative stress. These functions might be dependent on each isozyme/isoform in each plant tissue. Involved in the synthesis of highly polymerized lignins. The sequence is that of Basic peroxidase (POD3) from Zinnia elegans (Garden zinnia).